We begin with the raw amino-acid sequence, 258 residues long: Flagellin B3 (258 aa).

The propeptide occupies 1-8 (MRFLKKRG).

Belongs to the archaeal flagellin family.

The protein resides in the archaeal flagellum. Functionally, flagellin is the subunit protein which polymerizes to form the filaments of archaeal flagella. In Thermococcus kodakarensis (strain ATCC BAA-918 / JCM 12380 / KOD1) (Pyrococcus kodakaraensis (strain KOD1)), this protein is Flagellin B3 (flaB3).